Here is a 434-residue protein sequence, read N- to C-terminus: Nicotinate phosphoribosyltransferase (434 aa).

Position 242 is a phosphohistidine; by autocatalysis (H242).

This sequence belongs to the NAPRTase family. Post-translationally, transiently phosphorylated on a His residue during the reaction cycle. Phosphorylation strongly increases the affinity for substrates and increases the rate of nicotinate D-ribonucleotide production. Dephosphorylation regenerates the low-affinity form of the enzyme, leading to product release.

The enzyme catalyses nicotinate + 5-phospho-alpha-D-ribose 1-diphosphate + ATP + H2O = nicotinate beta-D-ribonucleotide + ADP + phosphate + diphosphate. It participates in cofactor biosynthesis; NAD(+) biosynthesis; nicotinate D-ribonucleotide from nicotinate: step 1/1. Catalyzes the synthesis of beta-nicotinate D-ribonucleotide from nicotinate and 5-phospho-D-ribose 1-phosphate at the expense of ATP. This chain is Nicotinate phosphoribosyltransferase, found in Bartonella tribocorum (strain CIP 105476 / IBS 506).